Consider the following 40-residue polypeptide: Antimicrobial peptide 1 (40 aa).

A Chitin-binding type-1 domain is found at 1-40 (AQCGAQGGGATCPGGLCCSQWGWCGSTPKYCGAGCQSNCK). Disulfide bonds link cysteine 3–cysteine 18, cysteine 12–cysteine 24, cysteine 17–cysteine 31, and cysteine 35–cysteine 39.

Post-translationally, not glycosylated.

Antimicrobial peptide active against plant pathogenic fungi and Gram-negative and -positive bacteria. The protein is Antimicrobial peptide 1 of Fagopyrum esculentum (Common buckwheat).